A 264-amino-acid chain; its full sequence is Protein-L-isoaspartate O-methyltransferase (264 aa).

A disordered region spans residues 1 to 49 (MRKPVGSKDGSGVYSRQGLDGYTPANSNTRISTATLPRPEPLRPAASSA). Residues 24–35 (PANSNTRISTAT) show a composition bias toward polar residues. Residue Ser-112 is part of the active site.

This sequence belongs to the methyltransferase superfamily. L-isoaspartyl/D-aspartyl protein methyltransferase family.

It localises to the cytoplasm. The enzyme catalyses [protein]-L-isoaspartate + S-adenosyl-L-methionine = [protein]-L-isoaspartate alpha-methyl ester + S-adenosyl-L-homocysteine. Functionally, catalyzes the methyl esterification of L-isoaspartyl residues in peptides and proteins that result from spontaneous decomposition of normal L-aspartyl and L-asparaginyl residues. It plays a role in the repair and/or degradation of damaged proteins. The polypeptide is Protein-L-isoaspartate O-methyltransferase (Bordetella avium (strain 197N)).